Reading from the N-terminus, the 206-residue chain is Pyridoxine/pyridoxamine 5'-phosphate oxidase (206 aa).

Residues 53 to 58 (RMVLLK), 68 to 69 (YT), K75, and Q97 each bind FMN. A substrate-binding site is contributed by K58. Substrate-binding residues include Y115, R119, and S123. FMN is bound by residues 132–133 (QS) and W177. Residue 183–185 (RLH) coordinates substrate. R187 contacts FMN.

It belongs to the pyridoxamine 5'-phosphate oxidase family. Homodimer. It depends on FMN as a cofactor.

It catalyses the reaction pyridoxamine 5'-phosphate + O2 + H2O = pyridoxal 5'-phosphate + H2O2 + NH4(+). The catalysed reaction is pyridoxine 5'-phosphate + O2 = pyridoxal 5'-phosphate + H2O2. The protein operates within cofactor metabolism; pyridoxal 5'-phosphate salvage; pyridoxal 5'-phosphate from pyridoxamine 5'-phosphate: step 1/1. It functions in the pathway cofactor metabolism; pyridoxal 5'-phosphate salvage; pyridoxal 5'-phosphate from pyridoxine 5'-phosphate: step 1/1. Functionally, catalyzes the oxidation of either pyridoxine 5'-phosphate (PNP) or pyridoxamine 5'-phosphate (PMP) into pyridoxal 5'-phosphate (PLP). The sequence is that of Pyridoxine/pyridoxamine 5'-phosphate oxidase from Allorhizobium ampelinum (strain ATCC BAA-846 / DSM 112012 / S4) (Agrobacterium vitis (strain S4)).